Reading from the N-terminus, the 303-residue chain is Imidazoleglycerol-phosphate dehydratase (303 aa).

It belongs to the imidazoleglycerol-phosphate dehydratase family.

Its subcellular location is the cytoplasm. It catalyses the reaction D-erythro-1-(imidazol-4-yl)glycerol 3-phosphate = 3-(imidazol-4-yl)-2-oxopropyl phosphate + H2O. It participates in amino-acid biosynthesis; L-histidine biosynthesis; L-histidine from 5-phospho-alpha-D-ribose 1-diphosphate: step 6/9. The protein is Imidazoleglycerol-phosphate dehydratase of Neisseria gonorrhoeae (strain ATCC 700825 / FA 1090).